The following is a 712-amino-acid chain: Polyribonucleotide nucleotidyltransferase (712 aa).

The Mg(2+) site is built by Asp487 and Asp493. The region spanning 554–613 (PKIITMTINPDKIRDVIGPSGKQINKIIEETGVKIDIEQDGTVFISSINQEMNDKAKKII) is the KH domain. Residues 623-691 (GEIYEGKVKR…KQGRVNLSRK (69 aa)) enclose the S1 motif domain.

The protein belongs to the polyribonucleotide nucleotidyltransferase family. Mg(2+) serves as cofactor.

The protein resides in the cytoplasm. It carries out the reaction RNA(n+1) + phosphate = RNA(n) + a ribonucleoside 5'-diphosphate. Involved in mRNA degradation. Catalyzes the phosphorolysis of single-stranded polyribonucleotides processively in the 3'- to 5'-direction. This is Polyribonucleotide nucleotidyltransferase from Bacillus cereus (strain AH187).